A 315-amino-acid chain; its full sequence is Glycine--tRNA ligase alpha subunit (315 aa).

Belongs to the class-II aminoacyl-tRNA synthetase family. As to quaternary structure, tetramer of two alpha and two beta subunits.

Its subcellular location is the cytoplasm. The catalysed reaction is tRNA(Gly) + glycine + ATP = glycyl-tRNA(Gly) + AMP + diphosphate. This is Glycine--tRNA ligase alpha subunit from Ectopseudomonas mendocina (strain ymp) (Pseudomonas mendocina).